Consider the following 156-residue polypeptide: Ribosomal RNA large subunit methyltransferase H (156 aa).

S-adenosyl-L-methionine is bound by residues leucine 74, glycine 105, and 124–129 (LSKLTL).

Belongs to the RNA methyltransferase RlmH family. As to quaternary structure, homodimer.

The protein resides in the cytoplasm. It carries out the reaction pseudouridine(1915) in 23S rRNA + S-adenosyl-L-methionine = N(3)-methylpseudouridine(1915) in 23S rRNA + S-adenosyl-L-homocysteine + H(+). Functionally, specifically methylates the pseudouridine at position 1915 (m3Psi1915) in 23S rRNA. The protein is Ribosomal RNA large subunit methyltransferase H of Legionella pneumophila (strain Paris).